Reading from the N-terminus, the 2377-residue chain is DNA (cytosine-5-)-methyltransferase DMT5 (2377 aa).

The interval 24–56 (GTADGAVNGGNIPNSQSQKRKRASPSPEIESEE) is disordered. Residues 62–126 (YEIDYIADSR…KNPGKPRLSP (65 aa)) form the Chromo; shadow subtype domain. Residues 150-282 (GKSRAASSTD…KSSLPKAKLR (133 aa)) form a disordered region. Residues 201-213 (PTSKKVHPNKKCK) show a composition bias toward basic residues. Acidic residues-rich tracts occupy residues 217 to 238 (DDESDFVFEEGEWDEDEDDDND) and 245 to 263 (EDDEDDEQERSAEEPESDE). Over residues 268–282 (PAKKTKSSLPKAKLR) the composition is skewed to basic residues. The region spanning 347 to 753 (LRVATMCSGT…IAALKVACHK (407 aa)) is the SAM-dependent MTase C5-type domain. Cys440 is an active-site residue. The Helicase ATP-binding domain occupies 1450-1771 (AERPVMVRGG…RSIATFMGIH (322 aa)). 1463–1470 (DQVGYGKT) is an ATP binding site. Disordered regions lie at residues 1642 to 1680 (KGQAYRDKHDSDSKAKPITKEELERWEASEDEDDDENSK), 2313 to 2334 (KGRGSSISMTNEKRTPTLTVKS), and 2347 to 2377 (SSFRSKKRSMEARDAEGVSDDDENSELSDII). Basic and acidic residues predominate over residues 1645–1669 (AYRDKHDSDSKAKPITKEELERWEA). One can recognise a Helicase C-terminal domain in the interval 2152–2315 (KLEHLVNLIH…EIPQEEYKGR (164 aa)). A compositionally biased stretch (polar residues) spans 2317–2334 (SSISMTNEKRTPTLTVKS). Residues 2363-2377 (GVSDDDENSELSDII) are compositionally biased toward acidic residues.

The protein in the N-terminal section; belongs to the class I-like SAM-binding methyltransferase superfamily. C5-methyltransferase family. This sequence in the C-terminal section; belongs to the SNF2/RAD54 helicase family. As to quaternary structure, interacts with SWI6. It depends on Mg(2+) as a cofactor.

It localises to the nucleus. The protein localises to the chromosome. The enzyme catalyses a 2'-deoxycytidine in DNA + S-adenosyl-L-methionine + ATP + H2O = a 5-methyl-2'-deoxycytidine in DNA + S-adenosyl-L-homocysteine + ADP + phosphate + 2 H(+). With respect to regulation, hemimethylated DNA substrates stimulate ATP hydrolysis and this is a prerequisite for methyltransferase activity. Functionally, ATP-dependent cytosine methylase that maintains DNA methylation by acting at hemimethylated palindromic 5'-CG-3' sites to produce symmetrically methylated DNA strands. DNA methylation may play a role in transcriptional silencing, particularly at transposable elements. This chain is DNA (cytosine-5-)-methyltransferase DMT5, found in Cryptococcus neoformans var. grubii serotype A (strain H99 / ATCC 208821 / CBS 10515 / FGSC 9487) (Filobasidiella neoformans var. grubii).